A 143-amino-acid polypeptide reads, in one-letter code: Peptide methionine sulfoxide reductase MsrB (143 aa).

Positions 16–139 constitute a MsrB domain; that stretch reads DAELRRRLTP…NSAALNFEAK (124 aa). Zn(2+)-binding residues include Cys-55, Cys-58, Cys-104, and Cys-107. The active-site Nucleophile is Cys-128.

The protein belongs to the MsrB Met sulfoxide reductase family. The cofactor is Zn(2+).

The catalysed reaction is L-methionyl-[protein] + [thioredoxin]-disulfide + H2O = L-methionyl-(R)-S-oxide-[protein] + [thioredoxin]-dithiol. This chain is Peptide methionine sulfoxide reductase MsrB, found in Burkholderia pseudomallei (strain 1710b).